The sequence spans 370 residues: Phosphate-binding protein PstS 2 (370 aa).

The N-terminal stretch at 1–22 is a signal peptide; the sequence is MKFARSGAAVSLLAAGTLVLTA. C23 is lipidated: N-palmitoyl cysteine. The S-diacylglycerol cysteine moiety is linked to residue C23. Residues 54–56, S84, D102, and 191–193 each bind phosphate; these read STA and SGT.

It belongs to the PstS family. In terms of assembly, the complex is composed of two ATP-binding proteins (PstB), two transmembrane proteins (PstC and PstA) and a solute-binding protein (PstS).

The protein resides in the cell membrane. Its function is as follows. Functions in inorganic phosphate uptake, although probably not the main uptake protein under phosphate starvation. Part of the ABC transporter complex PstSACB involved in phosphate import. This Mycobacterium tuberculosis (strain ATCC 25618 / H37Rv) protein is Phosphate-binding protein PstS 2 (pstS2).